A 316-amino-acid polypeptide reads, in one-letter code: Adenine deaminase (316 aa).

Zn(2+)-binding residues include H14, H16, and H194. The Proton donor role is filled by E197. D275 contacts Zn(2+). Residue D276 participates in substrate binding.

Belongs to the metallo-dependent hydrolases superfamily. Adenosine and AMP deaminases family. Adenine deaminase type 2 subfamily. Requires Zn(2+) as cofactor.

The catalysed reaction is adenine + H2O + H(+) = hypoxanthine + NH4(+). In terms of biological role, catalyzes the hydrolytic deamination of adenine to hypoxanthine. Plays an important role in the purine salvage pathway and in nitrogen catabolism. This is Adenine deaminase from Pseudomonas entomophila (strain L48).